A 315-amino-acid polypeptide reads, in one-letter code: Probable NAD(P)H-dependent D-xylose reductase xyl1 (315 aa).

Residue Tyr-50 is the Proton donor of the active site. Residue His-112 coordinates substrate. NAD(+) contacts are provided by residues 166-167 (SN), 215-224 (SSFGPLSFVE), and 271-281 (KSNDPTRLAQN).

It belongs to the aldo/keto reductase family.

The catalysed reaction is xylitol + NAD(+) = D-xylose + NADH + H(+). It carries out the reaction xylitol + NADP(+) = D-xylose + NADPH + H(+). The protein operates within carbohydrate metabolism; D-xylose degradation. Its function is as follows. Catalyzes the initial reaction in the xylose utilization pathway by reducing D-xylose into xylitol. Xylose is a major component of hemicelluloses such as xylan. Most fungi utilize D-xylose via three enzymatic reactions, xylose reductase (XR), xylitol dehydrogenase (XDH), and xylulokinase, to form xylulose 5-phosphate, which enters pentose phosphate pathway. This Aspergillus fumigatus (strain ATCC MYA-4609 / CBS 101355 / FGSC A1100 / Af293) (Neosartorya fumigata) protein is Probable NAD(P)H-dependent D-xylose reductase xyl1 (xyl1).